A 131-amino-acid polypeptide reads, in one-letter code: Large ribosomal subunit protein bL19 (131 aa).

The tract at residues 110–131 (KSARIAERTDDRAKKAKATAAE) is disordered. Over residues 113 to 122 (RIAERTDDRA) the composition is skewed to basic and acidic residues.

The protein belongs to the bacterial ribosomal protein bL19 family.

In terms of biological role, this protein is located at the 30S-50S ribosomal subunit interface and may play a role in the structure and function of the aminoacyl-tRNA binding site. This chain is Large ribosomal subunit protein bL19, found in Azorhizobium caulinodans (strain ATCC 43989 / DSM 5975 / JCM 20966 / LMG 6465 / NBRC 14845 / NCIMB 13405 / ORS 571).